Here is a 369-residue protein sequence, read N- to C-terminus: Glutamate 5-kinase (369 aa).

Lysine 9 lines the ATP pocket. Substrate contacts are provided by serine 49, aspartate 136, and asparagine 148. Residues 168–169 and 210–216 each bind ATP; these read TD and TGGMLTK. The PUA domain maps to 275–355; it reads RGSVYVDEGA…KGVFIHRDDW (81 aa).

It belongs to the glutamate 5-kinase family.

It localises to the cytoplasm. It carries out the reaction L-glutamate + ATP = L-glutamyl 5-phosphate + ADP. It participates in amino-acid biosynthesis; L-proline biosynthesis; L-glutamate 5-semialdehyde from L-glutamate: step 1/2. Its function is as follows. Catalyzes the transfer of a phosphate group to glutamate to form L-glutamate 5-phosphate. This is Glutamate 5-kinase from Neisseria meningitidis serogroup C / serotype 2a (strain ATCC 700532 / DSM 15464 / FAM18).